A 453-amino-acid polypeptide reads, in one-letter code: Aldehyde dehydrogenase, dimeric NADP-preferring (453 aa).

Serine 2 carries the N-acetylserine modification. The residue at position 178 (lysine 178) is an N6-acetyllysine. Position 188-193 (glycine 188–glycine 193) interacts with NAD(+). Residue lysine 194 is modified to N6-acetyllysine. Active-site residues include glutamate 210 and cysteine 244.

This sequence belongs to the aldehyde dehydrogenase family. In terms of assembly, homodimer.

The protein localises to the cytoplasm. The catalysed reaction is an aldehyde + NAD(+) + H2O = a carboxylate + NADH + 2 H(+). It catalyses the reaction octanal + NAD(+) + H2O = octanoate + NADH + 2 H(+). Functionally, ALDHs play a major role in the detoxification of alcohol-derived acetaldehyde. They are involved in the metabolism of corticosteroids, biogenic amines, neurotransmitters, and lipid peroxidation. Oxidizes medium and long chain aldehydes into non-toxic fatty acids. Preferentially oxidizes aromatic aldehyde substrates. Comprises about 50 percent of corneal epithelial soluble proteins. May play a role in preventing corneal damage caused by ultraviolet light. The chain is Aldehyde dehydrogenase, dimeric NADP-preferring (ALDH3A1) from Canis lupus familiaris (Dog).